A 236-amino-acid polypeptide reads, in one-letter code: Small ribosomal subunit protein uS5 (236 aa).

The span at 1–10 shows a compositional bias: basic and acidic residues; sequence MTENNEKDIQ. Positions 1–64 are disordered; that stretch reads MTENNEKDIQ…GRDGGREAEK (64 aa). A compositionally biased stretch (low complexity) spans 11–27; the sequence is VTEAVAAPATETAAPAT. Positions 28-64 are enriched in basic and acidic residues; sequence TDDRRGGARRGERGDRGQGRGDRGGRGGRDGGREAEK. The region spanning 67 to 130 is the S5 DRBM domain; that stretch reads FVERVVTINR…EEAKKSFFRV (64 aa).

It belongs to the universal ribosomal protein uS5 family. In terms of assembly, part of the 30S ribosomal subunit. Contacts proteins S4 and S8.

Its function is as follows. With S4 and S12 plays an important role in translational accuracy. Functionally, located at the back of the 30S subunit body where it stabilizes the conformation of the head with respect to the body. The sequence is that of Small ribosomal subunit protein uS5 from Arthrobacter sp. (strain FB24).